The sequence spans 506 residues: MRDPLTDCSYNKVYKSLKEFAQHGDNFCKQITSVLQQRANLEISYAKGLQKLAVRLSKALQSTKKNCLSTAWAWASESMKSAADLHQKLGKAIELEAIKPTHQVLSMQEKKRKSLDNEVEKTANLVINNWNQQIKAKKKLMMSTKKHEALFHLVESSKQSLTQKEKQKLLNKLKKSTEKLEKEDESYYQKNMAGYSTRLKWESTLENCYKSMLELEKERIQLLCNNLNQYSQHISLFGQTLTTCHTQIHCAISKVDVEKDIQALMEETAILSIENKSELLLADYFEEDPKNPMDKERRKSLLKPKLGRLQRDIEKASRDKEGLERKLKALASSSSFSDAKSQKDMETLMDENSLKLDLLQANSYKLSSVLADLEQRPKPCHPCSTCIFKWKEKEHSHTYVKISRPLLTKRLEKAESKAPAGGQNNPSSSPSGSTVSQASKHLCKALYTFQARQDDELNLEKGDIVTVHEKKEEGWWFGSLKGKRGHFPAAYVEELPPKAGNTATQA.

An F-BAR domain is found at 1 to 260 (MRDPLTDCSY…AISKVDVEKD (260 aa)). Ser-114 bears the Phosphoserine mark. Coiled coils occupy residues 160-230 (SLTQ…LNQY) and 305-334 (KLGR…ASSS). The REM-1 domain occupies 292-372 (PMDKERRKSL…SYKLSSVLAD (81 aa)). The interval 413 to 435 (KAESKAPAGGQNNPSSSPSGSTV) is disordered. The span at 419-435 (PAGGQNNPSSSPSGSTV) shows a compositional bias: low complexity. The 60-residue stretch at 438–497 (ASKHLCKALYTFQARQDDELNLEKGDIVTVHEKKEEGWWFGSLKGKRGHFPAAYVEELPP) folds into the SH3 domain. Ser-479 is modified (phosphoserine).

Homotrimer. Interacts with NOS3, DNM2, WASL and CAV1. Interacts with DAB2. Interacts (via SH3 domain) with DNM2; this interaction allows the recruitment of NOS3 to dynamin-positive structures.

Its subcellular location is the cell membrane. It is found in the cytoplasmic vesicle. The protein resides in the cytoplasm. It localises to the cytoskeleton. The protein localises to the nucleus. Functionally, multivalent adapter protein which may decrease NOS3 activity by inducing its translocation away from the plasma membrane. The protein is Nostrin of Mus musculus (Mouse).